The primary structure comprises 662 residues: UvrABC system protein B (662 aa).

The region spanning 25–182 (KGIEKGEKFQ…KKLVEIQYER (158 aa)) is the Helicase ATP-binding domain. 38 to 45 (GVTGSGKT) provides a ligand contact to ATP. The Beta-hairpin signature appears at 91–114 (YYDYYQPEAYVAQSDTYIEKDASI). A Helicase C-terminal domain is found at 429 to 595 (QIDDLYTSIQ…TIIKDIREVI (167 aa)). A UVR domain is found at 622–657 (DKLIEKYEEEMKEAAQNLQFEKAAHLRDVIYKLKRD).

This sequence belongs to the UvrB family. Forms a heterotetramer with UvrA during the search for lesions. Interacts with UvrC in an incision complex.

The protein resides in the cytoplasm. In terms of biological role, the UvrABC repair system catalyzes the recognition and processing of DNA lesions. A damage recognition complex composed of 2 UvrA and 2 UvrB subunits scans DNA for abnormalities. Upon binding of the UvrA(2)B(2) complex to a putative damaged site, the DNA wraps around one UvrB monomer. DNA wrap is dependent on ATP binding by UvrB and probably causes local melting of the DNA helix, facilitating insertion of UvrB beta-hairpin between the DNA strands. Then UvrB probes one DNA strand for the presence of a lesion. If a lesion is found the UvrA subunits dissociate and the UvrB-DNA preincision complex is formed. This complex is subsequently bound by UvrC and the second UvrB is released. If no lesion is found, the DNA wraps around the other UvrB subunit that will check the other stand for damage. The polypeptide is UvrABC system protein B (Clostridium botulinum (strain Loch Maree / Type A3)).